The sequence spans 171 residues: UPF0398 protein Sez_1569 (171 aa).

It belongs to the UPF0398 family.

The protein is UPF0398 protein Sez_1569 of Streptococcus equi subsp. zooepidemicus (strain MGCS10565).